We begin with the raw amino-acid sequence, 98 residues long: DNA-directed RNA polymerase subunit omega (98 aa).

This sequence belongs to the RNA polymerase subunit omega family. As to quaternary structure, the RNAP catalytic core consists of 2 alpha, 1 beta, 1 beta' and 1 omega subunit. When a sigma factor is associated with the core the holoenzyme is formed, which can initiate transcription.

It carries out the reaction RNA(n) + a ribonucleoside 5'-triphosphate = RNA(n+1) + diphosphate. Promotes RNA polymerase assembly. Latches the N- and C-terminal regions of the beta' subunit thereby facilitating its interaction with the beta and alpha subunits. The sequence is that of DNA-directed RNA polymerase subunit omega from Xylella fastidiosa (strain M12).